A 486-amino-acid polypeptide reads, in one-letter code: ATP synthase subunit beta (486 aa).

Residue 167–174 (GGAGVGKT) participates in ATP binding.

This sequence belongs to the ATPase alpha/beta chains family. F-type ATPases have 2 components, CF(1) - the catalytic core - and CF(0) - the membrane proton channel. CF(1) has five subunits: alpha(3), beta(3), gamma(1), delta(1), epsilon(1). CF(0) has three main subunits: a(1), b(2) and c(9-12). The alpha and beta chains form an alternating ring which encloses part of the gamma chain. CF(1) is attached to CF(0) by a central stalk formed by the gamma and epsilon chains, while a peripheral stalk is formed by the delta and b chains.

It is found in the cell inner membrane. The enzyme catalyses ATP + H2O + 4 H(+)(in) = ADP + phosphate + 5 H(+)(out). Its function is as follows. Produces ATP from ADP in the presence of a proton gradient across the membrane. The catalytic sites are hosted primarily by the beta subunits. The protein is ATP synthase subunit beta of Anaplasma marginale (strain St. Maries).